Here is a 1400-residue protein sequence, read N- to C-terminus: DNA-directed RNA polymerase subunit beta' (1400 aa).

Positions 71, 73, 86, and 89 each coordinate Zn(2+). Positions 462, 464, and 466 each coordinate Mg(2+). Zn(2+) is bound by residues C811, C885, C892, and C895.

Belongs to the RNA polymerase beta' chain family. The RNAP catalytic core consists of 2 alpha, 1 beta, 1 beta' and 1 omega subunit. When a sigma factor is associated with the core the holoenzyme is formed, which can initiate transcription. It depends on Mg(2+) as a cofactor. Zn(2+) is required as a cofactor.

The catalysed reaction is RNA(n) + a ribonucleoside 5'-triphosphate = RNA(n+1) + diphosphate. Functionally, DNA-dependent RNA polymerase catalyzes the transcription of DNA into RNA using the four ribonucleoside triphosphates as substrates. This Brucella melitensis biotype 1 (strain ATCC 23456 / CCUG 17765 / NCTC 10094 / 16M) protein is DNA-directed RNA polymerase subunit beta'.